A 213-amino-acid chain; its full sequence is MDPALAAQMSEAVAEKMLQYRRDTAGWKICREGNGVSVSWRPSMEFPGNLYRGEGIVYGTLEEVWDCVKPAVGGLRVKWDENVTGFEIIQSITDTLCVSRTSTPSAAMKLISPRDFVDLVLVKRYEDGTISSNATHVEHPLCPPKPGFVRGFNHPCGCFCEPLPGEPTKTNLVTFFHTDLSGYLPQNVVDSFFPRSMTRFYANLQKAVKQFHE.

Positions 1–213 (MDPALAAQMS…LQKAVKQFHE (213 aa)) constitute an START domain.

Its function is as follows. May be involved in the intracellular transport of sterols or other lipids. May bind cholesterol or other sterols. The sequence is that of StAR-related lipid transfer protein 5 (STARD5) from Pongo abelii (Sumatran orangutan).